The primary structure comprises 241 residues: Proteasome subunit alpha (241 aa).

This sequence belongs to the peptidase T1A family. As to quaternary structure, the 20S proteasome core is composed of 14 alpha and 14 beta subunits that assemble into four stacked heptameric rings, resulting in a barrel-shaped structure. The two inner rings, each composed of seven catalytic beta subunits, are sandwiched by two outer rings, each composed of seven alpha subunits. The catalytic chamber with the active sites is on the inside of the barrel. Has a gated structure, the ends of the cylinder being occluded by the N-termini of the alpha-subunits. Is capped at one or both ends by the proteasome regulatory ATPase, PAN.

It localises to the cytoplasm. Its activity is regulated as follows. The formation of the proteasomal ATPase PAN-20S proteasome complex, via the docking of the C-termini of PAN into the intersubunit pockets in the alpha-rings, triggers opening of the gate for substrate entry. Interconversion between the open-gate and close-gate conformations leads to a dynamic regulation of the 20S proteasome proteolysis activity. Its function is as follows. Component of the proteasome core, a large protease complex with broad specificity involved in protein degradation. The protein is Proteasome subunit alpha of Saccharolobus solfataricus (strain ATCC 35092 / DSM 1617 / JCM 11322 / P2) (Sulfolobus solfataricus).